The sequence spans 170 residues: Inosine/xanthosine triphosphatase (170 aa).

The protein belongs to the YjjX NTPase family. Homodimer. The cofactor is Mg(2+). Requires Mn(2+) as cofactor.

The enzyme catalyses XTP + H2O = XDP + phosphate + H(+). The catalysed reaction is ITP + H2O = IDP + phosphate + H(+). In terms of biological role, phosphatase that hydrolyzes non-canonical purine nucleotides such as XTP and ITP to their respective diphosphate derivatives. Probably excludes non-canonical purines from DNA/RNA precursor pool, thus preventing their incorporation into DNA/RNA and avoiding chromosomal lesions. The chain is Inosine/xanthosine triphosphatase from Aliivibrio fischeri (strain MJ11) (Vibrio fischeri).